Here is a 353-residue protein sequence, read N- to C-terminus: Cyclic GMP-AMP synthase-like receptor (353 aa).

Residues Ser-60 and 72–74 each bind ATP; that span reads EYD. Mg(2+) contacts are provided by Glu-72, Asp-74, and Asp-183. Asp-183 contacts GTP. Lys-245 lines the ATP pocket. Residues Leu-269 and Glu-270 each contribute to the Mn(2+) site.

Belongs to the mab-21 family. Mg(2+) is required as a cofactor. It depends on Mn(2+) as a cofactor.

It catalyses the reaction GTP + ATP = 2',3'-cGAMP + 2 diphosphate. The catalysed reaction is GTP + ATP = pppGp(2'-5')A + diphosphate. The enzyme catalyses pppGp(2'-5')A = 2',3'-cGAMP + diphosphate. Nucleotidyltransferase that catalyzes the formation of cyclic GMP-AMP (2',3'-cGAMP) from ATP and GTP and plays a key role in innate immunity. Acts as a key sensor of double-stranded RNA (dsRNA), the presence of dsRNA in the cytoplasm being a danger signal that triggers the immune responses. Directly binds dsRNA, activating the nucleotidyltransferase activity, leading to synthesis of 2',3'-cGAMP, a second messenger that binds to and activates Sting, thereby triggering the immune response via activation of the NF-kappa-B transcription factor. This Nicrophorus vespilloides (Boreal carrion beetle) protein is Cyclic GMP-AMP synthase-like receptor.